Here is a 635-residue protein sequence, read N- to C-terminus: Threonine--tRNA ligase (635 aa).

The 58-residue stretch at 1–58 (MIHVTCNQEAFELPEGASAMDLANKMKQSHCFAGALINDQEKDLSTTLQDGDTVLFLT) folds into the TGS domain. Residues 237 to 528 (DHRVLGTKLD…LIEHFKGRFP (292 aa)) are catalytic. Zn(2+) contacts are provided by Cys328, His379, and His505.

It belongs to the class-II aminoacyl-tRNA synthetase family. Homodimer. It depends on Zn(2+) as a cofactor.

It is found in the cytoplasm. It catalyses the reaction tRNA(Thr) + L-threonine + ATP = L-threonyl-tRNA(Thr) + AMP + diphosphate + H(+). Functionally, catalyzes the attachment of threonine to tRNA(Thr) in a two-step reaction: L-threonine is first activated by ATP to form Thr-AMP and then transferred to the acceptor end of tRNA(Thr). Also edits incorrectly charged L-seryl-tRNA(Thr). This is Threonine--tRNA ligase from Chlamydia trachomatis serovar A (strain ATCC VR-571B / DSM 19440 / HAR-13).